Here is a 327-residue protein sequence, read N- to C-terminus: Undecaprenyl-phosphate 4-deoxy-4-formamido-L-arabinose transferase (327 aa).

The next 2 membrane-spanning stretches (helical) occupy residues 233–253 and 268–288; these read ILSL…LLLI and VFTL…GMGL.

The protein belongs to the glycosyltransferase 2 family.

Its subcellular location is the cell inner membrane. The enzyme catalyses UDP-4-deoxy-4-formamido-beta-L-arabinose + di-trans,octa-cis-undecaprenyl phosphate = 4-deoxy-4-formamido-alpha-L-arabinopyranosyl di-trans,octa-cis-undecaprenyl phosphate + UDP. It participates in glycolipid biosynthesis; 4-amino-4-deoxy-alpha-L-arabinose undecaprenyl phosphate biosynthesis; 4-amino-4-deoxy-alpha-L-arabinose undecaprenyl phosphate from UDP-4-deoxy-4-formamido-beta-L-arabinose and undecaprenyl phosphate: step 1/2. It functions in the pathway bacterial outer membrane biogenesis; lipopolysaccharide biosynthesis. In terms of biological role, catalyzes the transfer of 4-deoxy-4-formamido-L-arabinose from UDP to undecaprenyl phosphate. The modified arabinose is attached to lipid A and is required for resistance to polymyxin and cationic antimicrobial peptides. This chain is Undecaprenyl-phosphate 4-deoxy-4-formamido-L-arabinose transferase, found in Pectobacterium atrosepticum (strain SCRI 1043 / ATCC BAA-672) (Erwinia carotovora subsp. atroseptica).